The following is a 453-amino-acid chain: tRNA modification GTPase MnmE (453 aa).

Residues R22, E79, and K119 each contribute to the (6S)-5-formyl-5,6,7,8-tetrahydrofolate site. One can recognise a TrmE-type G domain in the interval 215 to 376; it reads GMKVVIAGRP…LKQHLKSLMG (162 aa). N225 is a K(+) binding site. Residues 225–230, 244–250, 269–272, and 334–337 each bind GTP; these read NAGKSS, TEIAGTT, DTAG, and NKAD. S229 is a Mg(2+) binding site. Residues T244, I246, and T249 each coordinate K(+). T250 serves as a coordination point for Mg(2+). K453 serves as a coordination point for (6S)-5-formyl-5,6,7,8-tetrahydrofolate.

It belongs to the TRAFAC class TrmE-Era-EngA-EngB-Septin-like GTPase superfamily. TrmE GTPase family. In terms of assembly, homodimer. Heterotetramer of two MnmE and two MnmG subunits. K(+) serves as cofactor.

Its subcellular location is the cytoplasm. In terms of biological role, exhibits a very high intrinsic GTPase hydrolysis rate. Involved in the addition of a carboxymethylaminomethyl (cmnm) group at the wobble position (U34) of certain tRNAs, forming tRNA-cmnm(5)s(2)U34. In Shewanella baltica (strain OS195), this protein is tRNA modification GTPase MnmE.